The chain runs to 322 residues: 2-oxoglutarate-dependent dioxygenase caaD (322 aa).

In terms of domain architecture, Fe2OG dioxygenase spans 172–279; it reads TGNAAMFLKL…FAVPAFWHGD (108 aa). Fe cation is bound by residues H200, D202, and H259. R269 serves as a coordination point for 2-oxoglutarate.

Belongs to the iron/ascorbate-dependent oxidoreductase family. The cofactor is Fe(2+).

It participates in secondary metabolite biosynthesis. In terms of biological role, 2-oxoglutarate-dependent dioxygenase; part of the gene cluster that produces the acyltetronic acid derivatives carlosic acid, agglomerin F and carlosic acid methyl ether. CaaD catalyzes the sequential oxidations of the terminal C-10 methyl group of the caaC product to form carboxylic acid which is necessary for the biosynthesis of agglomerin F. The chain is 2-oxoglutarate-dependent dioxygenase caaD from Aspergillus niger (strain ATCC MYA-4892 / CBS 513.88 / FGSC A1513).